A 61-amino-acid polypeptide reads, in one-letter code: Small ribosomal subunit protein uS14 (61 aa).

The Zn(2+) site is built by cysteine 24, cysteine 27, cysteine 40, and cysteine 43.

It belongs to the universal ribosomal protein uS14 family. Zinc-binding uS14 subfamily. Part of the 30S ribosomal subunit. Contacts proteins S3 and S10. The cofactor is Zn(2+).

Binds 16S rRNA, required for the assembly of 30S particles and may also be responsible for determining the conformation of the 16S rRNA at the A site. This is Small ribosomal subunit protein uS14 from Staphylococcus aureus (strain USA300 / TCH1516).